The following is a 610-amino-acid chain: Glutamine--fructose-6-phosphate aminotransferase [isomerizing] (610 aa).

Residue C2 is the Nucleophile; for GATase activity of the active site. In terms of domain architecture, Glutamine amidotransferase type-2 spans 2–218 (CGIVGAVAQR…EGDVAEITRH (217 aa)). SIS domains lie at 286–426 (AADI…LKGR) and 459–600 (LSED…VDQP). The For Fru-6P isomerization activity role is filled by K605.

Homodimer.

Its subcellular location is the cytoplasm. It catalyses the reaction D-fructose 6-phosphate + L-glutamine = D-glucosamine 6-phosphate + L-glutamate. In terms of biological role, catalyzes the first step in hexosamine metabolism, converting fructose-6P into glucosamine-6P using glutamine as a nitrogen source. This is Glutamine--fructose-6-phosphate aminotransferase [isomerizing] from Haemophilus ducreyi (strain 35000HP / ATCC 700724).